The primary structure comprises 448 residues: MEQKFKTDSMNEDRISDLPDALLLQILSSLPTENAIATSVLSKRWRSLWTMLPKLKFDSNFNPVFDDDNIDPTMFSENVYKTLSLHKAPVLESLHLSFEGRTDCLHVGIWIATAFARGVRKLVLDSFYQEDQTVTLPSVLFSYNDSLEILKLKCAIDLDFPSRVCLKSLRKLYLDQVHFKDEESVCNLLCGCPSLQDLVVHRYSNADVATFTIASPSLQRLTIEDLRQEGGYGNGSYVINAPGLKYLNINGVIDIESCLIDKALELEEAKISNVSGITNENILESLTSAKRLILHLSPLEVKVPTGKIFDQLGCLELLTHEREWWNLLSIMLDSSPKLQILKLTDVYLHDNKTNPDERKWNPPKCAPECLLFHLETFLWIGYEWQRGDEKEVATYILENARRLKKATFSTKRIGREKLEDFEKRREMLNELAIVLWDSNSCHLVFEST.

The region spanning 12-64 (EDRISDLPDALLLQILSSLPTENAIATSVLSKRWRSLWTMLPKLKFDSNFNPV) is the F-box domain. LRR repeat units lie at residues 72–98 (PTMF…HLSF), 149–176 (ILKL…YLDQ), 177–202 (VHFK…VVHR), 204–225 (SNAD…TIED), 226–251 (LRQE…NING), 271–296 (ISNV…ILHL), and 319–345 (THER…KLTD). Residues 359-410 (KWNPPKCAPECLLFHLETFLWIGYEWQRGDEKEVATYILENARRLKKATFST) form the FBD domain.

This chain is F-box/FBD/LRR-repeat protein At2g04230, found in Arabidopsis thaliana (Mouse-ear cress).